A 283-amino-acid chain; its full sequence is MPVSRYAVFGHPVAHSLSPAIHTEFGKQTGIALDYTAIDAPLEDFSAALQRFADEGGKGANVTLPLKEAAYALASSLSDRARLAGAVNTLVRNDGQWQGDNTDGAGLVRDLTERQGLDLRGRRVLLLGAGGAARGVAPALLEAGITAMVVVNRSPERADALCDALGEPARVTSRYIEDLRELGDFELIVNATAAGRDRDAGAFALPLGLVNSLTAAVDLNYGDTAIAFLAWARAAQCRYAIDGLGMLVEQAAESFALWHGVRPDTDPVYAALRAREAVLVSAD.

Residues 16–18 (SLS) and Thr63 contribute to the shikimate site. Lys67 serves as the catalytic Proton acceptor. Asp79 contributes to the NADP(+) binding site. 2 residues coordinate shikimate: Asn88 and Asp103. NADP(+) contacts are provided by residues 128-132 (GAGGA) and Gly243.

This sequence belongs to the shikimate dehydrogenase family. In terms of assembly, homodimer.

It catalyses the reaction shikimate + NADP(+) = 3-dehydroshikimate + NADPH + H(+). It functions in the pathway metabolic intermediate biosynthesis; chorismate biosynthesis; chorismate from D-erythrose 4-phosphate and phosphoenolpyruvate: step 4/7. Functionally, involved in the biosynthesis of the chorismate, which leads to the biosynthesis of aromatic amino acids. Catalyzes the reversible NADPH linked reduction of 3-dehydroshikimate (DHSA) to yield shikimate (SA). This Xanthomonas euvesicatoria pv. vesicatoria (strain 85-10) (Xanthomonas campestris pv. vesicatoria) protein is Shikimate dehydrogenase (NADP(+)).